We begin with the raw amino-acid sequence, 71 residues long: ATP synthase F(0) complex subunit e, mitochondrial (71 aa).

Lysine 34 is subject to N6-acetyllysine. Serine 68 is subject to Phosphoserine.

The protein belongs to the ATPase e subunit family. In terms of assembly, component of the ATP synthase complex composed at least of ATP5F1A/subunit alpha, ATP5F1B/subunit beta, ATP5MC1/subunit c (homooctomer), MT-ATP6/subunit a, MT-ATP8/subunit 8, ATP5ME/subunit e, ATP5MF/subunit f, ATP5MG/subunit g, ATP5MK/subunit k, ATP5MJ/subunit j, ATP5F1C/subunit gamma, ATP5F1D/subunit delta, ATP5F1E/subunit epsilon, ATP5PF/subunit F6, ATP5PB/subunit b, ATP5PD/subunit d, ATP5PO/subunit OSCP. ATP synthase complex consists of a soluble F(1) head domain (subunits alpha(3) and beta(3)) - the catalytic core - and a membrane F(0) domain - the membrane proton channel (subunits c, a, 8, e, f, g, k and j). These two domains are linked by a central stalk (subunits gamma, delta, and epsilon) rotating inside the F1 region and a stationary peripheral stalk (subunits F6, b, d, and OSCP).

It localises to the mitochondrion. The protein localises to the mitochondrion inner membrane. Subunit e, of the mitochondrial membrane ATP synthase complex (F(1)F(0) ATP synthase or Complex V) that produces ATP from ADP in the presence of a proton gradient across the membrane which is generated by electron transport complexes of the respiratory chain. ATP synthase complex consist of a soluble F(1) head domain - the catalytic core - and a membrane F(1) domain - the membrane proton channel. These two domains are linked by a central stalk rotating inside the F(1) region and a stationary peripheral stalk. During catalysis, ATP synthesis in the catalytic domain of F(1) is coupled via a rotary mechanism of the central stalk subunits to proton translocation. In vivo, can only synthesize ATP although its ATP hydrolase activity can be activated artificially in vitro. Part of the complex F(0) domain. This is ATP synthase F(0) complex subunit e, mitochondrial from Sus scrofa (Pig).